The primary structure comprises 562 residues: Urocanate hydratase (562 aa).

NAD(+) contacts are provided by residues 52–53 (GG), glutamine 130, 176–178 (GMG), glutamate 196, arginine 201, 242–243 (NA), 263–267 (QTSAH), 273–274 (YL), and tyrosine 322. The active site involves cysteine 410. Glycine 492 serves as a coordination point for NAD(+).

This sequence belongs to the urocanase family. The cofactor is NAD(+).

Its subcellular location is the cytoplasm. The enzyme catalyses 4-imidazolone-5-propanoate = trans-urocanate + H2O. It functions in the pathway amino-acid degradation; L-histidine degradation into L-glutamate; N-formimidoyl-L-glutamate from L-histidine: step 2/3. Catalyzes the conversion of urocanate to 4-imidazolone-5-propionate. The polypeptide is Urocanate hydratase (Shewanella pealeana (strain ATCC 700345 / ANG-SQ1)).